We begin with the raw amino-acid sequence, 85 residues long: Small ribosomal subunit protein bS18 (85 aa).

Belongs to the bacterial ribosomal protein bS18 family. Part of the 30S ribosomal subunit. Forms a tight heterodimer with protein bS6.

In terms of biological role, binds as a heterodimer with protein bS6 to the central domain of the 16S rRNA, where it helps stabilize the platform of the 30S subunit. This is Small ribosomal subunit protein bS18 from Hyphomonas neptunium (strain ATCC 15444).